Consider the following 448-residue polypeptide: Protein king tubby (448 aa).

Positions His103–Asp195 are disordered. Positions Gln118 to Gln133 are enriched in low complexity. A Phosphoserine modification is found at Ser141. A compositionally biased stretch (gly residues) spans Asn182 to Glu191.

The protein belongs to the TUB family.

It is found in the cytoplasm. The protein resides in the nucleus. It localises to the cell projection. The protein localises to the cilium membrane. Its subcellular location is the rhabdomere. The chain is Protein king tubby from Drosophila erecta (Fruit fly).